Reading from the N-terminus, the 151-residue chain is NAD(P)H-quinone oxidoreductase subunit N (151 aa).

Belongs to the complex I NdhN subunit family. In terms of assembly, NDH-1 can be composed of about 15 different subunits; different subcomplexes with different compositions have been identified which probably have different functions.

The protein localises to the cellular thylakoid membrane. It carries out the reaction a plastoquinone + NADH + (n+1) H(+)(in) = a plastoquinol + NAD(+) + n H(+)(out). The catalysed reaction is a plastoquinone + NADPH + (n+1) H(+)(in) = a plastoquinol + NADP(+) + n H(+)(out). Its function is as follows. NDH-1 shuttles electrons from an unknown electron donor, via FMN and iron-sulfur (Fe-S) centers, to quinones in the respiratory and/or the photosynthetic chain. The immediate electron acceptor for the enzyme in this species is believed to be plastoquinone. Couples the redox reaction to proton translocation, and thus conserves the redox energy in a proton gradient. Cyanobacterial NDH-1 also plays a role in inorganic carbon-concentration. The sequence is that of NAD(P)H-quinone oxidoreductase subunit N from Acaryochloris marina (strain MBIC 11017).